Reading from the N-terminus, the 508-residue chain is Endoglucanase 6 (508 aa).

The first 33 residues, 1-33, serve as a signal peptide directing secretion; it reads MLAASLRVEAVAVVAAAVLVLLLSPAAVVVVAG. Asp-89 acts as the Nucleophile in catalysis. Active-site residues include His-419, Asp-471, and Glu-480.

It belongs to the glycosyl hydrolase 9 (cellulase E) family.

The protein localises to the secreted. The catalysed reaction is Endohydrolysis of (1-&gt;4)-beta-D-glucosidic linkages in cellulose, lichenin and cereal beta-D-glucans.. The sequence is that of Endoglucanase 6 from Oryza sativa subsp. japonica (Rice).